The sequence spans 310 residues: 4-hydroxyproline 2-epimerase (310 aa).

Catalysis depends on Cys88, which acts as the Proton acceptor. Residues 89–90, His208, and Asp232 contribute to the substrate site; that span reads GH. Cys236 serves as the catalytic Proton donor. 237–238 contributes to the substrate binding site; the sequence is GT.

This sequence belongs to the proline racemase family.

It catalyses the reaction trans-4-hydroxy-L-proline = cis-4-hydroxy-D-proline. Catalyzes the epimerization of trans-4-hydroxy-L-proline (t4LHyp) to cis-4-hydroxy-D-proline (c4DHyp). Is likely involved in a degradation pathway that converts t4LHyp to alpha-ketoglutarate. Displays no proline racemase activity. This chain is 4-hydroxyproline 2-epimerase, found in Burkholderia cenocepacia (strain ATCC BAA-245 / DSM 16553 / LMG 16656 / NCTC 13227 / J2315 / CF5610) (Burkholderia cepacia (strain J2315)).